The sequence spans 107 residues: EMBRYO SURROUNDING FACTOR 1-like protein 5 (107 aa).

Residues 1–22 (MSLLRFAILCIIFVSLFGVHEC) form the signal peptide. 4 cysteine pairs are disulfide-bonded: Cys35–Cys49, Cys40–Cys69, Cys47–Cys65, and Cys50–Cys58. A helical transmembrane segment spans residues 87–107 (GLGPPIYLFFLGQFIYFVLGL).

It belongs to the MEG family. As to expression, expressed in flowers.

It is found in the membrane. The polypeptide is EMBRYO SURROUNDING FACTOR 1-like protein 5 (ESFL5) (Arabidopsis thaliana (Mouse-ear cress)).